Consider the following 142-residue polypeptide: Hemoglobin subunit alpha (142 aa).

Residues 2–142 (VLSAADKGHV…VSTVLTSKYR (141 aa)) enclose the Globin domain. At serine 4 the chain carries Phosphoserine. N6-succinyllysine is present on residues lysine 8 and lysine 12. Lysine 17 carries the post-translational modification N6-acetyllysine; alternate. Lysine 17 is subject to N6-succinyllysine; alternate. Tyrosine 25 carries the post-translational modification Phosphotyrosine. Serine 36 carries the phosphoserine modification. The residue at position 41 (lysine 41) is an N6-succinyllysine. Serine 50 carries the phosphoserine modification. Histidine 59 provides a ligand contact to O2. Histidine 88 serves as a coordination point for heme b. Serine 103 is subject to Phosphoserine. Position 109 is a phosphothreonine (threonine 109). The residue at position 125 (serine 125) is a Phosphoserine. A phosphothreonine mark is found at threonine 135 and threonine 138. Serine 139 is subject to Phosphoserine.

This sequence belongs to the globin family. As to quaternary structure, heterotetramer of two alpha chains and two beta chains. In terms of tissue distribution, red blood cells.

In terms of biological role, involved in oxygen transport from the lung to the various peripheral tissues. Hemopressin acts as an antagonist peptide of the cannabinoid receptor CNR1. Hemopressin-binding efficiently blocks cannabinoid receptor CNR1 and subsequent signaling. The protein is Hemoglobin subunit alpha (HBA) of Notamacropus eugenii (Tammar wallaby).